Consider the following 522-residue polypeptide: Poly(A) polymerase (522 aa).

Residues 63–65, 76–78, Asp-130, Lys-193, Tyr-202, and 211–212 each bind ATP; these read YGS, DID, and GI. Mg(2+) is bound by residues Asp-76, Asp-78, and Asp-130. Residues 475-522 are disordered; it reads QLKAKEENSIPNEEKKEQLKKEMKQEANTIVKNSSTDDDFMKRFTRKN. Positions 476-499 are enriched in basic and acidic residues; the sequence is LKAKEENSIPNEEKKEQLKKEMKQ.

It belongs to the poly(A) polymerase family. Mg(2+) is required as a cofactor. It depends on Mn(2+) as a cofactor.

It localises to the cytoplasm. The protein localises to the nucleus. The enzyme catalyses RNA(n) + ATP = RNA(n)-3'-adenine ribonucleotide + diphosphate. Functionally, polymerase that creates the 3'-poly(A) tail of mRNA's. May acquire specificity through interaction with a cleavage and polyadenylation factor. The sequence is that of Poly(A) polymerase from Entamoeba histolytica (strain ATCC 30459 / HM-1:IMSS / ABRM).